We begin with the raw amino-acid sequence, 163 residues long: MLKRGLLFLTVLLLLFSFSSITNEVSASSSFDKGKYKKGDDASYFEPTGPYLMVNVTGVDGKGNELLSPHYVEFPIKPGTTLTKEKIEYYVEWALDATAYKEFRVVELDPSAKIEVTYYDKNKKKEETKSFPITEKGFVVPDLSEHIKNPGFNLITKVIIEKK.

The signal sequence occupies residues 1–27; that stretch reads MLKRGLLFLTVLLLLFSFSSITNEVSA.

It belongs to the staphylokinase family.

It localises to the secreted. Functionally, potent plasminogen activator that converts plasminogen into plasmin. It forms a 1:1 complex with plasmin, which in turn activates other plasminogen molecules. The protein is Staphylokinase (sak) of Staphylococcus aureus (strain MRSA252).